A 142-amino-acid polypeptide reads, in one-letter code: Large ribosomal subunit protein uL22c (142 aa).

The protein belongs to the universal ribosomal protein uL22 family. In terms of assembly, part of the 50S ribosomal subunit.

Its subcellular location is the plastid. The protein localises to the chloroplast. Functionally, this protein binds specifically to 23S rRNA. In terms of biological role, the globular domain of the protein is located near the polypeptide exit tunnel on the outside of the subunit, while an extended beta-hairpin is found that lines the wall of the exit tunnel in the center of the 70S ribosome. The chain is Large ribosomal subunit protein uL22c (rpl22) from Carica papaya (Papaya).